Here is a 360-residue protein sequence, read N- to C-terminus: UDP-arabinopyranose mutase 2 (360 aa).

Valine 2 bears the N-acetylvaline mark. A DXD motif motif is present at residues 110-112 (DDD). The N-linked (Glc...) arginine glycan is linked to arginine 158.

The protein belongs to the RGP family. In terms of assembly, heteromers with RGP1, RGP4 and RGP5. The cofactor is Mn(2+). Requires Mg(2+) as cofactor. Reversibly glycosylated in vitro by UDP-glucose, UDP-xylose and UDP-galactose, but not UDP-mannose. As to expression, predominantly expressed in shoot and root apical meristems. Expressed in epidermal cells of leaves, inflorescence stems and seed coat. Expressed in pollen.

It localises to the cytoplasm. Its subcellular location is the cytosol. The protein resides in the golgi apparatus. It carries out the reaction UDP-beta-L-arabinofuranose = UDP-beta-L-arabinopyranose. Its function is as follows. UDP-L-arabinose mutase involved in the biosynthesis of cell wall non-cellulosic polysaccharides. Catalyzes the interconvertion of UDP-L-arabinopyranose (UDP-Arap) and UDP-L-arabinofuranose (UDP-Araf) in vitro. Preferentially catalyzes the formation of UDP-Arap from UDP-Araf. At thermodynamic equilibrium in vitro the ratio of the pyranose form over the furanose form is 95:5. Is not active on other UDP-sugars (UDP-Gal, UDP-Xyl, UDP-Glc, GDP-Man and GDP-Fuc). Functions redundantly with RGP2 and is essential for proper cell walls and pollen development. Probably involved in the formation of the pectocellulosic cell wall layer intine. Is probably active as heteromer in vivo. The sequence is that of UDP-arabinopyranose mutase 2 from Arabidopsis thaliana (Mouse-ear cress).